Here is a 912-residue protein sequence, read N- to C-terminus: MDYKATLNLPQTNFQMKANLVNKEPEMLKFWEEKEIYKKTLETRANAPTYLLHDGPPYANGDIHLGTAMNKILKDFVTRYKTMRGYRVPFVPGWDTHGLPIEHRVTTSLGEEAKKKSPAEIRKLCKEFALKYVDIQREEFKRLGVKGDWEHPYITLDPDYEYHILDVFKTLVENGNVYRGNKPVYWCPTCRTALAEAEIEYHDHESPSIYVKFQMVDKPDTYIVIWTTTPWTIPANVAIALHPDYTYVKIKVDEEYWIVAEGLLQKFAADVGIDFEVVEKFVGKELEGKLTKHPLYDRTSVVVLADYVTLEDGTGCVHTAPGHGEEDYQTGLKYNLPVLSPVDDEGRFTKEAGKYEGLKIWDANKVIVEDLKNNGSLIKAGKISHSYPHCWRCKGPVMFRATPQWFISVDKNNLRGKVLEEIKKVKWYPAWGETRITAMVQERPDWTISRQRVWGVPIPAVKCKDCGEVTLEPKVIEHFANIVKEKGTDAWFELDVNELIPADFKCPACGSKNFEKTHDTLDVWIDSGCSWEAVIRSKGERFPVDLYLEGDDQHRGWFQSSIFLSTAKAGTAPFKAVVTHGFIKDEQGRKMSKSLGNVIDPMEIVNKYGADILRLWVASTDFFDNIRVGKNIIEQQVEVYRKLRNTLRYLLSNLYDFTEADLLPYEKLLPLDKWALGRLQKFIEQITQYYEGFEYSKVYNATVKYCTTELSAVYLDILKDRLYVEAKDSIYRRSAQTALHYILEALIKILAPIIPFTAEEAYQESHLKRYESVHLEYWPEVRKEFIDEALLEEFDHLLLIRDDVLKALENARASDIIGHSLDAHVIIEAKNEELKNLLRKYESLLEEFFIVSKVTLSENISGLNGQFANVLVQRAEGQKCQRCWKYHPDTGKDLEHPETCPRCSAVLRGERK.

The 'HIGH' region signature appears at 57–67 (PYANGDIHLGT). Glu-549 serves as a coordination point for L-isoleucyl-5'-AMP. The short motif at 590-594 (KMSKS) is the 'KMSKS' region element. Lys-593 lines the ATP pocket. Positions 880, 883, 900, and 903 each coordinate Zn(2+).

It belongs to the class-I aminoacyl-tRNA synthetase family. IleS type 1 subfamily. As to quaternary structure, monomer. It depends on Zn(2+) as a cofactor.

It is found in the cytoplasm. It carries out the reaction tRNA(Ile) + L-isoleucine + ATP = L-isoleucyl-tRNA(Ile) + AMP + diphosphate. Functionally, catalyzes the attachment of isoleucine to tRNA(Ile). As IleRS can inadvertently accommodate and process structurally similar amino acids such as valine, to avoid such errors it has two additional distinct tRNA(Ile)-dependent editing activities. One activity is designated as 'pretransfer' editing and involves the hydrolysis of activated Val-AMP. The other activity is designated 'posttransfer' editing and involves deacylation of mischarged Val-tRNA(Ile). This chain is Isoleucine--tRNA ligase, found in Fervidobacterium pennivorans (strain DSM 9078 / Ven5).